The following is a 418-amino-acid chain: Light-independent protochlorophyllide reductase subunit N (418 aa).

[4Fe-4S] cluster-binding residues include C17, C42, and C103.

It belongs to the BchN/ChlN family. Protochlorophyllide reductase is composed of three subunits; ChlL, ChlN and ChlB. Forms a heterotetramer of two ChlB and two ChlN subunits. [4Fe-4S] cluster serves as cofactor.

The enzyme catalyses chlorophyllide a + oxidized 2[4Fe-4S]-[ferredoxin] + 2 ADP + 2 phosphate = protochlorophyllide a + reduced 2[4Fe-4S]-[ferredoxin] + 2 ATP + 2 H2O. It functions in the pathway porphyrin-containing compound metabolism; chlorophyll biosynthesis (light-independent). Its function is as follows. Component of the dark-operative protochlorophyllide reductase (DPOR) that uses Mg-ATP and reduced ferredoxin to reduce ring D of protochlorophyllide (Pchlide) to form chlorophyllide a (Chlide). This reaction is light-independent. The NB-protein (ChlN-ChlB) is the catalytic component of the complex. This is Light-independent protochlorophyllide reductase subunit N from Prochlorococcus marinus (strain SARG / CCMP1375 / SS120).